Here is a 303-residue protein sequence, read N- to C-terminus: DCN1-like protein 3 (303 aa).

A disordered region spans residues 1–40 (MGQCVTKCKNPSSTLGSKNGERESSKPHKRSSSHKEEHMS). Residue G2 is the site of N-myristoyl glycine attachment. Residues 85-277 (SSLQRIEELF…LFDTFVEWEM (193 aa)) form the DCUN1 domain.

May interact (via the DCUN1 domain) with unneddylated cullins.

Its subcellular location is the cell membrane. The protein resides in the cytoplasm. It is found in the nucleus. It localises to the perinuclear region. Its function is as follows. Contributes to the neddylation of all cullins by transferring NEDD8 from N-terminally acetylated NEDD8-conjugating E2s enzyme to different cullin C-terminal domain-RBX complexes. At the cell membrane, can promote and as well inhibit cullins neddylation. This chain is DCN1-like protein 3, found in Xenopus laevis (African clawed frog).